The sequence spans 87 residues: uncharacterized protein (87 aa).

2 consecutive transmembrane segments (helical) span residues 25–45 (LVAAVIAVTMALWLGVQWLGG) and 53–73 (YAFLADLAAIGALIWSLLVTF).

It is found in the cell membrane. This is an uncharacterized protein from Paracoccus denitrificans.